The sequence spans 242 residues: 7-cyano-7-deazaguanine synthase (242 aa).

13 to 23 is an ATP binding site; it reads FSGGQDSSVCL. 4 residues coordinate Zn(2+): Cys201, Cys216, Cys219, and Cys222.

It belongs to the QueC family. Zn(2+) is required as a cofactor.

The enzyme catalyses 7-carboxy-7-deazaguanine + NH4(+) + ATP = 7-cyano-7-deazaguanine + ADP + phosphate + H2O + H(+). It participates in purine metabolism; 7-cyano-7-deazaguanine biosynthesis. Catalyzes the ATP-dependent conversion of 7-carboxy-7-deazaguanine (CDG) to 7-cyano-7-deazaguanine (preQ(0)). The protein is 7-cyano-7-deazaguanine synthase of Caulobacter vibrioides (strain ATCC 19089 / CIP 103742 / CB 15) (Caulobacter crescentus).